Consider the following 87-residue polypeptide: Small ribosomal subunit protein bS20 (87 aa).

It belongs to the bacterial ribosomal protein bS20 family.

Its function is as follows. Binds directly to 16S ribosomal RNA. The chain is Small ribosomal subunit protein bS20 from Alkaliphilus metalliredigens (strain QYMF).